Reading from the N-terminus, the 351-residue chain is UDP-3-O-acylglucosamine N-acyltransferase (351 aa).

His-240 serves as the catalytic Proton acceptor.

It belongs to the transferase hexapeptide repeat family. LpxD subfamily. Homotrimer.

The catalysed reaction is a UDP-3-O-[(3R)-3-hydroxyacyl]-alpha-D-glucosamine + a (3R)-hydroxyacyl-[ACP] = a UDP-2-N,3-O-bis[(3R)-3-hydroxyacyl]-alpha-D-glucosamine + holo-[ACP] + H(+). Its pathway is bacterial outer membrane biogenesis; LPS lipid A biosynthesis. In terms of biological role, catalyzes the N-acylation of UDP-3-O-acylglucosamine using 3-hydroxyacyl-ACP as the acyl donor. Is involved in the biosynthesis of lipid A, a phosphorylated glycolipid that anchors the lipopolysaccharide to the outer membrane of the cell. In Pseudomonas syringae pv. tomato (strain ATCC BAA-871 / DC3000), this protein is UDP-3-O-acylglucosamine N-acyltransferase.